Reading from the N-terminus, the 634-residue chain is Sodium-dependent multivitamin transporter (634 aa).

Helical transmembrane passes span 23–43, 65–85, 100–120, 142–162, 175–195, 207–227, 255–275, 295–315, 350–370, 403–423, 427–447, and 455–475; these read FSVV…VIGL, MGCL…VAIL, FLGC…IPVF, ICGT…ALYA, LWLS…LGGL, LIMF…VGGL, FWTL…VNQA, AVFP…LVMF, LPGL…SSAF, FAYG…GSVL, LSIF…GMFF, and AIVG…GSIV. 2 N-linked (GlcNAc...) asparagine glycosylation sites follow: asparagine 488 and asparagine 497. The chain crosses the membrane as a helical span at residues 526–546; it reads LWYSAHNSTTVIAVGLIVSLL.

The protein belongs to the sodium:solute symporter (SSF) (TC 2.A.21) family. As to quaternary structure, interacts with PDZD11. In terms of tissue distribution, expressed in the jejunum (at protein level). Expressed in lung, skeletal muscle, heart, brain, kidney, intestine, liver, and placenta.

The protein resides in the cell membrane. It is found in the apical cell membrane. It catalyses the reaction biotin(out) + 2 Na(+)(out) = biotin(in) + 2 Na(+)(in). The catalysed reaction is (R)-pantothenate(out) + 2 Na(+)(out) = (R)-pantothenate(in) + 2 Na(+)(in). The enzyme catalyses (R)-lipoate(out) + 2 Na(+)(out) = (R)-lipoate(in) + 2 Na(+)(in). It carries out the reaction iodide(out) + 2 Na(+)(out) = iodide(in) + 2 Na(+)(in). Its function is as follows. Sodium-dependent multivitamin transporter that mediates the electrogenic transport of pantothenate, biotin, lipoate and iodide. Functions as a Na(+)-coupled substrate symporter where the stoichiometry of Na(+):substrate is 2:1, creating an electrochemical Na(+) gradient used as driving force for substrate uptake. Required for biotin and pantothenate uptake in the intestine across the brush border membrane. Plays a role in the maintenance of intestinal mucosa integrity, by providing the gut mucosa with biotin. Contributes to the luminal uptake of biotin and pantothenate into the brain across the blood-brain barrier. The chain is Sodium-dependent multivitamin transporter from Rattus norvegicus (Rat).